Reading from the N-terminus, the 508-residue chain is MWELVTLLGLILAYLFWPRQGSSGTKYPKSLPSLPVVGSLPFLPKSGHMHVNFFKLQKKYGPIYSFRLGSTTTVVIGHHQLARELLIKKGKEFSGRPLTTTVALLSDNGKGIAFADSSATWQLHRRLVLSSFSLFRDGEQKLENIICQELSALCDFLATCDGQVKDLSSSIFMTVVNIICMICFSVSYKEGDMELVTIRRFTTGFVNSLSDDNLVDIFPWLKIFPNKTLEMIRKYTEIRGAMLSKILKECKEKFRSDSVSNLIDLLIQAKVNENNNNSSLDQDSNLFSDKHILTTLGDIFGAGVETSSSVVLWVIAFLLHNPQVKKKIQEEIDHNVGFSRTPTFSDRNHLLMLEATIREVLRIRPVAPILIPHKANTDSSIGEFAIDKDTNVLVNLWALHHNEQEWDRPDQFMPERFLDPTGSQIIVPSSSYLPFGAGPRSCVGEALARQEIFLITAWLLQKFDLEVPEGGQLPSLEGIPKIVFLIDPFKVKITVRPAWKEAQAEGSA.

Residue Cys442 participates in heme binding.

It belongs to the cytochrome P450 family. Requires heme as cofactor.

Its subcellular location is the endoplasmic reticulum membrane. The protein resides in the microsome membrane. The catalysed reaction is a C21-steroid + reduced [NADPH--hemoprotein reductase] + O2 = a 17alpha-hydroxy-C21-steroid + oxidized [NADPH--hemoprotein reductase] + H2O + H(+). It carries out the reaction progesterone + reduced [NADPH--hemoprotein reductase] + O2 = 17alpha-hydroxyprogesterone + oxidized [NADPH--hemoprotein reductase] + H2O + H(+). It catalyses the reaction pregnenolone + reduced [NADPH--hemoprotein reductase] + O2 = 17alpha-hydroxypregnenolone + oxidized [NADPH--hemoprotein reductase] + H2O + H(+). The enzyme catalyses 17alpha-hydroxyprogesterone + reduced [NADPH--hemoprotein reductase] + O2 = androst-4-ene-3,17-dione + acetate + oxidized [NADPH--hemoprotein reductase] + H2O + 2 H(+). The catalysed reaction is 17alpha-hydroxyprogesterone + reduced [NADPH--hemoprotein reductase] + O2 = 16alpha,17alpha-dihydroxyprogesterone + oxidized [NADPH--hemoprotein reductase] + H2O + H(+). It carries out the reaction 16alpha,17alpha-dihydroxyprogesterone + reduced [NADPH--hemoprotein reductase] + O2 = 6beta,16alpha,17alpha-trihydroxyprogesterone + oxidized [NADPH--hemoprotein reductase] + H2O + H(+). It catalyses the reaction 17alpha-hydroxypregnenolone + reduced [NADPH--hemoprotein reductase] + O2 = 3beta-hydroxyandrost-5-en-17-one + acetate + oxidized [NADPH--hemoprotein reductase] + H2O + 2 H(+). The enzyme catalyses 16alpha,17alpha-dihydroxypregnenolone + reduced [NADPH--hemoprotein reductase] + O2 = 3beta,16alpha-dihydroxy-androst-5-en-17-one + acetate + oxidized [NADPH--hemoprotein reductase] + H2O + 2 H(+). The catalysed reaction is 3beta-hydroxyandrost-5-en-17-one + reduced [NADPH--hemoprotein reductase] + O2 = 3beta,16alpha-dihydroxy-androst-5-en-17-one + oxidized [NADPH--hemoprotein reductase] + H2O + H(+). It carries out the reaction androst-4-ene-3,17-dione + reduced [NADPH--hemoprotein reductase] + O2 = 16alpha-hydroxyandrost-4-ene-3,17-dione + oxidized [NADPH--hemoprotein reductase] + H2O + H(+). Its pathway is steroid hormone biosynthesis. It functions in the pathway steroid biosynthesis; glucocorticoid biosynthesis. Regulated predominantly by intracellular cAMP levels. The 17,20-lyase activity is stimulated by cytochrome b5, which acts as an allosteric effector increasing the Vmax of the lyase activity. In terms of biological role, a cytochrome P450 monooxygenase involved in corticoid and androgen biosynthesis. Catalyzes 17-alpha hydroxylation of C21 steroids, which is common for both pathways. A second oxidative step, required only for androgen synthesis, involves an acyl-carbon cleavage. The 17-alpha hydroxy intermediates, as part of adrenal glucocorticoids biosynthesis pathway, are precursors of cortisol. Hydroxylates steroid hormones, pregnenolone and progesterone to form 17-alpha hydroxy metabolites, followed by the cleavage of the C17-C20 bond to form C19 steroids, dehydroepiandrosterone (DHEA) and androstenedione. Has 16-alpha hydroxylase activity. Catalyzes 16-alpha hydroxylation of 17-alpha hydroxy pregnenolone, followed by the cleavage of the C17-C20 bond to form 16-alpha-hydroxy DHEA. Also 16-alpha hydroxylates androgens, relevant for estriol synthesis. Mechanistically, uses molecular oxygen inserting one oxygen atom into a substrate, and reducing the second into a water molecule, with two electrons provided by NADPH via cytochrome P450 reductase (CPR; NADPH-ferrihemoprotein reductase). This Cavia porcellus (Guinea pig) protein is Steroid 17-alpha-hydroxylase/17,20 lyase (CYP17A1).